A 131-amino-acid polypeptide reads, in one-letter code: Probable lactoylglutathione lyase (131 aa).

Residues 2 to 126 (FLLHTMIRVG…DGYKIELIQT (125 aa)) enclose the VOC domain. A Ni(2+)-binding site is contributed by His5. Arg9 contributes to the substrate binding site. Residue Glu56 participates in Ni(2+) binding. Substrate-binding residues include Asn60 and His74. Positions 74 and 122 each coordinate Ni(2+). Glu122 serves as the catalytic Proton donor/acceptor.

This sequence belongs to the glyoxalase I family. Requires Ni(2+) as cofactor.

It catalyses the reaction (R)-S-lactoylglutathione = methylglyoxal + glutathione. Its pathway is secondary metabolite metabolism; methylglyoxal degradation; (R)-lactate from methylglyoxal: step 1/2. Functionally, catalyzes the conversion of hemimercaptal, formed from methylglyoxal and glutathione, to S-lactoylglutathione. This Synechocystis sp. (strain ATCC 27184 / PCC 6803 / Kazusa) protein is Probable lactoylglutathione lyase (gloA).